Reading from the N-terminus, the 281-residue chain is 4-deoxy-L-threo-5-hexosulose-uronate ketol-isomerase (281 aa).

H198, H200, E205, and H248 together coordinate Zn(2+).

It belongs to the KduI family. Zn(2+) serves as cofactor.

The catalysed reaction is 5-dehydro-4-deoxy-D-glucuronate = 3-deoxy-D-glycero-2,5-hexodiulosonate. Its pathway is glycan metabolism; pectin degradation; 2-dehydro-3-deoxy-D-gluconate from pectin: step 4/5. Its function is as follows. Catalyzes the isomerization of 5-dehydro-4-deoxy-D-glucuronate to 3-deoxy-D-glycero-2,5-hexodiulosonate. The chain is 4-deoxy-L-threo-5-hexosulose-uronate ketol-isomerase from Lacticaseibacillus paracasei (strain ATCC 334 / BCRC 17002 / CCUG 31169 / CIP 107868 / KCTC 3260 / NRRL B-441) (Lactobacillus paracasei).